The chain runs to 100 residues: uncharacterized protein (100 aa).

Transmembrane regions (helical) follow at residues 50 to 70 and 75 to 95; these read LLIF…FSLF and DVFL…SPEV.

It localises to the membrane. This is an uncharacterized protein from Saccharomyces cerevisiae (strain ATCC 204508 / S288c) (Baker's yeast).